The chain runs to 274 residues: 3-methyl-2-oxobutanoate hydroxymethyltransferase (274 aa).

Residues D49 and D88 each coordinate Mg(2+). Residues 49-50 (DS), D88, and K118 contribute to the 3-methyl-2-oxobutanoate site. Residue E120 participates in Mg(2+) binding. E187 acts as the Proton acceptor in catalysis.

Belongs to the PanB family. Homodecamer; pentamer of dimers. It depends on Mg(2+) as a cofactor.

It is found in the cytoplasm. The catalysed reaction is 3-methyl-2-oxobutanoate + (6R)-5,10-methylene-5,6,7,8-tetrahydrofolate + H2O = 2-dehydropantoate + (6S)-5,6,7,8-tetrahydrofolate. The protein operates within cofactor biosynthesis; (R)-pantothenate biosynthesis; (R)-pantoate from 3-methyl-2-oxobutanoate: step 1/2. Catalyzes the reversible reaction in which hydroxymethyl group from 5,10-methylenetetrahydrofolate is transferred onto alpha-ketoisovalerate to form ketopantoate. The protein is 3-methyl-2-oxobutanoate hydroxymethyltransferase of Parvibaculum lavamentivorans (strain DS-1 / DSM 13023 / NCIMB 13966).